The primary structure comprises 510 residues: Bifunctional purine biosynthesis protein PurH (510 aa).

One can recognise an MGS-like domain in the interval 1-142; the sequence is MRALLSVSDK…KNYKDVMVLC (142 aa).

It belongs to the PurH family.

It carries out the reaction (6R)-10-formyltetrahydrofolate + 5-amino-1-(5-phospho-beta-D-ribosyl)imidazole-4-carboxamide = 5-formamido-1-(5-phospho-D-ribosyl)imidazole-4-carboxamide + (6S)-5,6,7,8-tetrahydrofolate. The enzyme catalyses IMP + H2O = 5-formamido-1-(5-phospho-D-ribosyl)imidazole-4-carboxamide. It functions in the pathway purine metabolism; IMP biosynthesis via de novo pathway; 5-formamido-1-(5-phospho-D-ribosyl)imidazole-4-carboxamide from 5-amino-1-(5-phospho-D-ribosyl)imidazole-4-carboxamide (10-formyl THF route): step 1/1. It participates in purine metabolism; IMP biosynthesis via de novo pathway; IMP from 5-formamido-1-(5-phospho-D-ribosyl)imidazole-4-carboxamide: step 1/1. The sequence is that of Bifunctional purine biosynthesis protein PurH from Campylobacter jejuni subsp. doylei (strain ATCC BAA-1458 / RM4099 / 269.97).